Reading from the N-terminus, the 1793-residue chain is uncharacterized protein (1793 aa).

Disordered stretches follow at residues 156 to 189 (ARQAEVGDGVSSAQDSQELKQQLWPLPKPSASSQ), 204 to 362 (QRES…PPKV), and 407 to 505 (ASFG…SGAA). Positions 166–175 (SSAQDSQELK) are enriched in polar residues. Positions 227–237 (SPKEKAQDEPS) are enriched in basic and acidic residues. The span at 238 to 247 (SKTPSPQNNP) shows a compositional bias: polar residues. Low complexity predominate over residues 248 to 258 (ASSQLSRSQHS). The span at 277–288 (KAEEDGLSKMED) shows a compositional bias: basic and acidic residues. Low complexity predominate over residues 289 to 307 (STTSTGALATSSSSLGFES). The span at 317-342 (AVGGEGEKISGGGGGGKGGGGGGAGD) shows a compositional bias: gly residues. Low complexity predominate over residues 434 to 450 (STTPSTNTTRTPSPTSS). The segment covering 463–476 (DTSSTEVGSGPSDS) has biased composition (polar residues). Over residues 485-505 (PGTAPLTEPLPETPEAASGAA) the composition is skewed to low complexity. T733 bears the Phosphothreonine mark. Disordered regions lie at residues 757-809 (RSES…SKFA), 829-917 (MERG…FTDG), 1090-1147 (RDIR…GSGS), 1161-1187 (QREDSMDREPRESMGKGGGSRVLNSSS), 1229-1249 (QKTPEKLKEEEVKEEGKATKP), 1408-1465 (TGGV…KSNS), and 1482-1567 (GELL…PLPF). 2 stretches are compositionally biased toward basic and acidic residues: residues 829 to 839 (MERGEVMDTSH) and 846 to 872 (KETEGARGSERQRERGLQRQSSRHSEA). Low complexity predominate over residues 1113–1123 (KGSGDSSDKGS). The segment covering 1161–1174 (QREDSMDREPRESM) has biased composition (basic and acidic residues). Phosphoserine is present on S1187. A compositionally biased stretch (basic and acidic residues) spans 1231-1246 (TPEKLKEEEVKEEGKA). Positions 1513–1528 (SQVPSSSKGSQVSGTS) are enriched in low complexity. Over residues 1546–1555 (PPGPQSPEHP) the composition is skewed to pro residues. The residue at position 1774 (R1774) is an Omega-N-methylarginine.

Expressed in muscle, heart, kidney and liver but barely detectable in lung, pancreas and brain. In liver veins, expressed in hepatic vein, extrahepatic portal vein and intrahepatic portal vein.

This is an uncharacterized protein from Homo sapiens (Human).